A 522-amino-acid polypeptide reads, in one-letter code: Anti-sigma-I factor RsgI4 (522 aa).

Topologically, residues methionine 1–asparagine 51 are cytoplasmic. Positions asparagine 2–asparagine 49 constitute a RsgI N-terminal anti-sigma domain. A helical membrane pass occupies residues glycine 52–phenylalanine 72. Residues threonine 73–proline 522 lie on the Extracellular side of the membrane. Residues serine 311–proline 361 are compositionally biased toward low complexity. The tract at residues serine 311 to glycine 371 is disordered. The 152-residue stretch at glycine 371–proline 522 folds into the CBM3 domain.

As to quaternary structure, interacts (via RsgI N-terminal anti-sigma domain) with SigI4.

The protein localises to the cell membrane. Its function is as follows. Anti-sigma factor for SigI4. Negatively regulates SigI4 activity through direct interaction. Binding of the polysaccharide substrate to the extracellular C-terminal sensing domain of RsgI4 may induce a conformational change in its N-terminal cytoplasmic region, leading to the release and activation of SigI4. The polypeptide is Anti-sigma-I factor RsgI4 (Acetivibrio thermocellus (strain ATCC 27405 / DSM 1237 / JCM 9322 / NBRC 103400 / NCIMB 10682 / NRRL B-4536 / VPI 7372) (Clostridium thermocellum)).